The primary structure comprises 397 residues: F-box protein At3g49450 (397 aa).

An F-box domain is found at 26-75; the sequence is GENSGTLPTDLMVEILSRVPAKSAARFRCVSNDWNSLLRSPYLTNLFLKR.

The sequence is that of F-box protein At3g49450 from Arabidopsis thaliana (Mouse-ear cress).